Here is a 689-residue protein sequence, read N- to C-terminus: Glycine--tRNA ligase beta subunit (689 aa).

Belongs to the class-II aminoacyl-tRNA synthetase family. As to quaternary structure, tetramer of two alpha and two beta subunits.

It is found in the cytoplasm. It carries out the reaction tRNA(Gly) + glycine + ATP = glycyl-tRNA(Gly) + AMP + diphosphate. The protein is Glycine--tRNA ligase beta subunit of Shewanella pealeana (strain ATCC 700345 / ANG-SQ1).